The chain runs to 377 residues: Bradyzoite pseudokinase 1 (377 aa).

A signal peptide spans 1–26 (MANTSVRRRQLLSSVLLLQWLTTVLG). Residues 39-58 (HGQFPSLRRTEGVSQSGSGH) are disordered. The Protein kinase domain maps to 48-354 (TEGVSQSGSG…IEEIMKDPLF (307 aa)).

Belongs to the protein kinase superfamily. STE Ser/Thr protein kinase family. WNG subfamily. Forms a complex composed of BPK1, MCP4, MAG1, GRA8 and GRA9. Interacts with MCP4. Interacts with MAG1. Interacts with GRA8. Interacts with GRA9.

The protein resides in the secreted. Required for the growth, maintenance, and/or stability, and thus infectivity, of bradyzoite cysts. In Toxoplasma gondii, this protein is Bradyzoite pseudokinase 1.